We begin with the raw amino-acid sequence, 348 residues long: Protein RecA (348 aa).

67-74 (GPESSGKT) provides a ligand contact to ATP.

It belongs to the RecA family.

Its subcellular location is the cytoplasm. In terms of biological role, can catalyze the hydrolysis of ATP in the presence of single-stranded DNA, the ATP-dependent uptake of single-stranded DNA by duplex DNA, and the ATP-dependent hybridization of homologous single-stranded DNAs. It interacts with LexA causing its activation and leading to its autocatalytic cleavage. The chain is Protein RecA from Amycolatopsis mediterranei (strain U-32).